The sequence spans 93 residues: Small ribosomal subunit protein uS19 (93 aa).

Belongs to the universal ribosomal protein uS19 family.

Functionally, protein S19 forms a complex with S13 that binds strongly to the 16S ribosomal RNA. The chain is Small ribosomal subunit protein uS19 from Geotalea uraniireducens (strain Rf4) (Geobacter uraniireducens).